The following is a 488-amino-acid chain: 5'-3' exonuclease PLD3 (488 aa).

Residues 1 to 38 lie on the Cytoplasmic side of the membrane; the sequence is MKPKLMYQELKVPVEEPAGELPMNEIEAWKAAEKKARW. The helical; Signal-anchor for type II membrane protein transmembrane segment at 39 to 59 threads the bilayer; it reads VLLVLILAVVGFGALMTQLFL. Over 60–488 the chain is Lumenal; sequence WEYGDLHLFG…DSVGNACRLL (429 aa). Cystine bridges form between Cys77–Cys237 and Cys81–Cys235. 2 N-linked (GlcNAc...) asparagine glycosylation sites follow: Asn97 and Asn132. In terms of domain architecture, PLD phosphodiesterase 1 spans 194–221; it reads THGVLHTKFWVVDQTHFYLGSANMDWRS. Catalysis depends on residues His199, Lys201, and Asp206. The Proton donor role is filled by His199. Phosphate is bound by residues His199 and Lys201. Asn216 contributes to the phosphate binding site. N-linked (GlcNAc...) asparagine glycosylation is found at Asn234, Asn282, and Asn385. The cysteines at positions 364 and 485 are disulfide-linked. Positions 409-435 constitute a PLD phosphodiesterase 2 domain; sequence YARVNHNKYMVTERTTYIGTSNWSGSY. Residue His414 participates in phosphate binding. The active-site Nucleophile is the His414. Phe436 provides a ligand contact to Mg(2+).

The protein belongs to the phospholipase D family. Homodimer. Interacts with APP. N-glycosylated. Post-translationally, proteolytically processed to a soluble form that is stable within endosomes and lysosomes. During transport through the secretory pathway becomes proteolysed by cysteine proteases, thereby releasing a stable soluble lysosomal lumenal polypeptide, whereas the transmembrane-bound fragment is rapidly degraded. Its transport route to lysosomes involves ubiquitination and the ESCRT complex. In terms of processing, ubiquitinated. Ubiquitination mediates sorting into lysosomes.

The protein localises to the endoplasmic reticulum membrane. It localises to the lysosome lumen. It is found in the early endosome membrane. Its subcellular location is the late endosome membrane. The protein resides in the golgi apparatus membrane. The protein localises to the endosome membrane. The enzyme catalyses Exonucleolytic cleavage in the 5'- to 3'-direction to yield nucleoside 3'-phosphates.. The catalysed reaction is a 5'-end 5'-dephospho-ribonucleotidyl-ribonucleotide-RNA + H2O = a ribonucleoside 3'-phosphate + a 5'-end dephospho-ribonucleoside-RNA + H(+). It carries out the reaction a ribonucleoside 3'-phosphate-2'-3'-cyclophospho-GMP + H2O = a ribonucleoside 3'-phosphate + 2',3'-cyclophospho-GMP + H(+). It catalyses the reaction a 5'-end 5'-dephospho-2'-deoxyribonucleotidyl-2'-deoxyribonucleotide in single-stranded DNA + H2O = a 5'-end dephospho-2'-deoxyribonucleoside in single-stranded DNA + a 2'-deoxyribonucleoside 3'-phosphate + H(+). The enzyme catalyses a 5'-end 5'-phospho-2'-deoxyribonucleotide in single-stranded DNA + H2O = a 5'-end 5'-dephospho-2'-deoxyribonucleotide in single-stranded DNA + phosphate. The catalysed reaction is a 3-lyso-sn-glycero-1-phospho-(3'-acyl-1'-sn-glycerol) + a 1-acyl-sn-glycerol = a 3-acyl-sn-glycero-1-phospho-(3'-acyl-1'-sn-glycerol) + glycerol. It carries out the reaction 3-lyso-sn-glycero-1-phospho-(3'-(9Z-octadecenoyl)-1'-sn-glycerol) + 1-(9Z-octadecenoyl)-sn-glycerol = 3-(9Z-octadecenoyl)-sn-glycero-1-phospho-(3'-(9Z-octadecenoyl)-1'-sn-glycerol) + glycerol. 5'-&gt;3' exonuclease that hydrolyzes the phosphodiester bond of single-stranded DNA (ssDNA) and RNA molecules to form nucleoside 3'-monophosphates and 5'-end 5'-hydroxy deoxyribonucleotide/ribonucleotide fragments. Partially redundant with PLD4, can cleave all four nucleotides displaying higher efficiency for ssDNA and RNA fragments initiated with uridine and guanosine residues and lower efficiency for cytidine-initiated substrates. As a result, it does not always degrade polynucleotides to the single nucleotide level, it can stall at specific sites sparing certain fragments from exonucleolytic degradation. Processes self and pathogenic ssDNA and RNA molecules that reach the endolysosomal compartment via phagocytosis or autophagy and may serve as 'danger' signals for recognition by innate immune receptors such as toll-like receptors (TLRs). Degrades mitochondrial CpG-rich ssDNA fragments to prevent TLR9 activation and autoinflammatory response, but it can cleave viral RNA to generate ligands for TLR7 activation and initiate antiviral immune responses. In plasmacytoid dendritic cells, it cooperates with endonuclease RNASET2 to release 2',3'-cyclic guanosine monophosphate (2',3'-cGMP), a potent stimulatory ligand for TLR7. Produces 2',3'-cGMPs and cytidine-rich RNA fragments that occupy TLR7 ligand-binding pockets and trigger a signaling-competent state. Can exert polynucleotide phosphatase activity toward 5'-phosphorylated ssDNA substrates although at a slow rate. Transphosphatidylase that catalyzes the exchange with R to S stereo-inversion of the glycerol moiety between (S,R)-lysophosphatidylglycerol (LPG) and monoacylglycerol (MAG) substrates to yield (S,S)-bis(monoacylglycero)phosphate (BMP). Can synthesize a variety of (S,S)-BMPs representing the main phospholipid constituent of lysosomal intralumenal vesicle (ILV) membranes that bind acid hydrolases for lipid degradation. Regulates the homeostasis and interorganellar communication of the endolysosomal system with an overall impact on cellular removal of dysfunctional organelles via autophagy as well as proper protein and lipid turnover. May play a role in myotube formation in response to ER stress. This chain is 5'-3' exonuclease PLD3 (Pld3), found in Rattus norvegicus (Rat).